The chain runs to 315 residues: MLADWFSEQFSTGVLIVPCMLTLAIPGVLPRFKAEQMMPAIALIVSVIASVVIGGAGSLAFPLPALIWCAVRYTPQVTCLLTFVTGAVEIVLVANSVIDISVGSPFSIPQMFSARLGIATMAICPIMVSFSVAAINSLMKQVALRADFDFLTQVYSRSGLYEALKSPSLKQTQHLTVMLLDIDYFKSINDNYGHECGDKVLSVFARHIQKIVGDKGLVARMGGEEFAVAVPSVNPVDGLLMAEKIRKGVELQPFTWQQKTLYLTVSIGVGSGRASYLTLTDDFNKLMVEADTCLYRSKKDGRNRTSTMRYGEEVV.

4 consecutive transmembrane segments (helical) span residues 10–30 (FSTG…GVLP), 41–61 (IALI…SLAF), 80–100 (LLTF…VIDI), and 116–136 (LGIA…AAIN). In terms of domain architecture, GGDEF spans 173-310 (QHLTVMLLDI…GRNRTSTMRY (138 aa)). Residues aspartate 181 and isoleucine 182 each contribute to the Mg(2+) site. The substrate site is built by asparagine 189, histidine 194, and aspartate 198. Glutamate 224 lines the Mg(2+) pocket.

In terms of assembly, homodimer. The cofactor is Mg(2+).

It localises to the cell membrane. The enzyme catalyses 2 GTP = 3',3'-c-di-GMP + 2 diphosphate. It functions in the pathway purine metabolism; 3',5'-cyclic di-GMP biosynthesis. Its function is as follows. Catalyzes the synthesis of cyclic-di-GMP (c-di-GMP) via the condensation of 2 GTP molecules. This chain is Probable diguanylate cyclase DgcF, found in Escherichia coli (strain K12).